Here is a 148-residue protein sequence, read N- to C-terminus: Aspartate 1-decarboxylase (148 aa).

The active-site Schiff-base intermediate with substrate; via pyruvic acid is the Ser-25. Pyruvic acid (Ser) is present on Ser-25. A substrate-binding site is contributed by Thr-57. Tyr-58 (proton donor) is an active-site residue. 73–75 serves as a coordination point for substrate; the sequence is GAA.

The protein belongs to the PanD family. Heterooctamer of four alpha and four beta subunits. Pyruvate is required as a cofactor. Post-translationally, is synthesized initially as an inactive proenzyme, which is activated by self-cleavage at a specific serine bond to produce a beta-subunit with a hydroxyl group at its C-terminus and an alpha-subunit with a pyruvoyl group at its N-terminus.

Its subcellular location is the cytoplasm. It catalyses the reaction L-aspartate + H(+) = beta-alanine + CO2. Its pathway is cofactor biosynthesis; (R)-pantothenate biosynthesis; beta-alanine from L-aspartate: step 1/1. Catalyzes the pyruvoyl-dependent decarboxylation of aspartate to produce beta-alanine. In Rhodococcus erythropolis (strain PR4 / NBRC 100887), this protein is Aspartate 1-decarboxylase.